A 351-amino-acid chain; its full sequence is DNA polymerase IV (351 aa).

Residues 4–185 (IIHIDMDCFY…LPLRKIPGVG (182 aa)) form the UmuC domain. Mg(2+) is bound by residues Asp8 and Asp103. Glu104 is a catalytic residue.

It belongs to the DNA polymerase type-Y family. As to quaternary structure, monomer. It depends on Mg(2+) as a cofactor.

The protein resides in the cytoplasm. It carries out the reaction DNA(n) + a 2'-deoxyribonucleoside 5'-triphosphate = DNA(n+1) + diphosphate. Poorly processive, error-prone DNA polymerase involved in untargeted mutagenesis. Copies undamaged DNA at stalled replication forks, which arise in vivo from mismatched or misaligned primer ends. These misaligned primers can be extended by PolIV. Exhibits no 3'-5' exonuclease (proofreading) activity. May be involved in translesional synthesis, in conjunction with the beta clamp from PolIII. The protein is DNA polymerase IV of Photorhabdus laumondii subsp. laumondii (strain DSM 15139 / CIP 105565 / TT01) (Photorhabdus luminescens subsp. laumondii).